Consider the following 225-residue polypeptide: UPF0173 metal-dependent hydrolase Pars_0810 (225 aa).

The protein belongs to the UPF0173 family.

The chain is UPF0173 metal-dependent hydrolase Pars_0810 from Pyrobaculum arsenaticum (strain DSM 13514 / JCM 11321 / PZ6).